A 223-amino-acid chain; its full sequence is NLP effector protein 3 (223 aa).

Positions alanine 90 to aspartate 100 match the Conserved undecapeptide motif motif. A Conserved heptapeptide motif motif is present at residues glycine 107–glutamate 113.

This sequence belongs to the Necrosis inducing protein (NPP1) family.

The protein localises to the secreted. The protein resides in the host cytoplasm. In terms of biological role, probable secreted effector that may act as a pathogen-associated molecular pattern (PAMP) recognized by the plant immune system. Seems not to induce necrosis, neither in several susceptible or resistant Vitis species nor in the dicot model plant Nicotiana benthamiana. This is NLP effector protein 3 from Plasmopara viticola (Downy mildew of grapevine).